Consider the following 372-residue polypeptide: Protein L-Myc-1a (372 aa).

Disordered regions lie at residues 172–226 and 243–306; these read KVAA…ADPF and NYAA…DDLR. Positions 187-197 are enriched in acidic residues; the sequence is SDDDEDDDEID. Low complexity predominate over residues 269 to 284; the sequence is ESSSAPSSPLSSPATS. The bHLH domain occupies 289-341; the sequence is STEQRRNFLERKRRDDLRSRFQALREEIPGLSGSSKTSKVAILTQATDYLLQL. Residues 290–306 show a composition bias toward basic and acidic residues; the sequence is TEQRRNFLERKRRDDLR. Positions 341–369 are leucine-zipper; it reads LHSSQRRQAQEKRKLKAKQQQLLRRISAL.

Efficient DNA binding requires dimerization with another bHLH protein. Binds DNA as a heterodimer with max. As to expression, uterus.

Its subcellular location is the nucleus. The chain is Protein L-Myc-1a from Danio rerio (Zebrafish).